We begin with the raw amino-acid sequence, 654 residues long: MTQITEKELKKKYLDLLSQNFDTPEKLATEIINLESILELPKGTEHFVSDLHGEYEAFQHVLRNGSGNVRAKINDIFKERLSTKELNDLTALVYYPEDKLKLIKSDFQNCGQLNVWYITTIEHLIELIKYCSSKYTRSKLRKALPKQYVYIIEELLYKSNEYQNKKSYYETLVNQVIELKQADDLIIGLAYSVQRLVVDHLHVVGDIYDRGPQPDKIMDTLINYHSLDIQWGNHDVLWVGAYAGSKVCLANLLRICARYDNLDIIEDAYGINLRPLLTLAEKYYDADNPAFKPKKRPDKHERLTQREESQITKIHQAIAMIQFKLEIPIIKRRPNFEMEERLVLEKVNYDTNEITVYGNTYPLKDTCFQTVNRDNPAELLPEEEEVMNKLLLSFQQSEKLRRHMSFLMRKGSLYLPYNGNLLIHGCIPVDENGEMESFEIDGHTYSGQELLDVFEYHVRKSFDEKENTDDLSTDLVWYLWTGKYSSLFGKRAMTTFERYFIADKASHKEEKNPYYHLREDVNMVRKMLSDFGLNPDEGRIINGHTPVKEINGEDPIKADGKMLVIDGGFSKAYQSTTGIAGYTLLYNSFGMQLVAHQQFNAKEKILSEGIDELSIKRVVDKELQRKKIRDTNIGKDLQAQIDILKMLMHDRYLD.

A disordered region spans residues 288-307 (NPAFKPKKRPDKHERLTQRE). The segment covering 298–307 (DKHERLTQRE) has biased composition (basic and acidic residues).

It belongs to the FBPase class 3 family. Mn(2+) is required as a cofactor.

It catalyses the reaction beta-D-fructose 1,6-bisphosphate + H2O = beta-D-fructose 6-phosphate + phosphate. It participates in carbohydrate biosynthesis; gluconeogenesis. The sequence is that of Fructose-1,6-bisphosphatase class 3 from Staphylococcus aureus (strain USA300).